A 74-amino-acid chain; its full sequence is Putative membrane protein insertion efficiency factor (74 aa).

This sequence belongs to the UPF0161 family.

It localises to the cell inner membrane. Functionally, could be involved in insertion of integral membrane proteins into the membrane. This chain is Putative membrane protein insertion efficiency factor, found in Blochmanniella floridana.